A 316-amino-acid chain; its full sequence is Probable cell division protein WhiA (316 aa).

The H-T-H motif DNA-binding region spans 280-313 (SLKELGEMLEPPVGKSGVNHRLRKIEKIAEELRT).

This sequence belongs to the WhiA family.

Involved in cell division and chromosome segregation. The protein is Probable cell division protein WhiA of Clostridium perfringens (strain ATCC 13124 / DSM 756 / JCM 1290 / NCIMB 6125 / NCTC 8237 / Type A).